A 285-amino-acid chain; its full sequence is Ribosomal protein L11 methyltransferase (285 aa).

4 residues coordinate S-adenosyl-L-methionine: Thr131, Gly154, Asp176, and Asn223.

The protein belongs to the methyltransferase superfamily. PrmA family.

Its subcellular location is the cytoplasm. The enzyme catalyses L-lysyl-[protein] + 3 S-adenosyl-L-methionine = N(6),N(6),N(6)-trimethyl-L-lysyl-[protein] + 3 S-adenosyl-L-homocysteine + 3 H(+). Methylates ribosomal protein L11. This Brucella abortus (strain S19) protein is Ribosomal protein L11 methyltransferase.